The primary structure comprises 156 residues: MGFERTSSSLSLLSSSLPSSLQPSENTRAKFSLFYLLLLFFVLCVIATFTITPTSTSSPYNRNSNSGTLGNFYAKEEGKSTVVIKKTRKIGDRSKEAELRRILRGLGSSPPRCSSKCGRCTPCKPVHVPVPPGTPVTAEYYPEAWRCKCGNKLYMP.

The N-terminal stretch at 1–47 is a signal peptide; sequence MGFERTSSSLSLLSSSLPSSLQPSENTRAKFSLFYLLLLFFVLCVIA. 3 disulfides stabilise this stretch: Cys113–Cys147, Cys117–Cys123, and Cys120–Cys149.

The protein belongs to the plant cysteine rich small secretory peptide family. Epidermal patterning factor subfamily. Interacts with ERECTA. In terms of tissue distribution, expressed in the internal layers of the root, hypocotyl and stems, and in the midrib of developing rosette leaves. Detected in a ring of cells surrounding the vascular elements. Expressed in developing stems soon after bolting, in inflorescence stems, near the root apex and in the chalazal region of ovules. Not found in cotyledons or in stomatal precursors or stomata.

The protein localises to the secreted. In terms of biological role, acts primarily as positive regulator of inflorescence growth. Endodermal expression is sufficient for proper inflorescence architecture. Redundantly involved with EPFL4 in procambial development regulation. Also acts as tissue-specific regulator of epidermal pattern. Controls stomatal patterning by repressing stomatal production. TMM (AC Q9SSD1) functions to dampen or block CHAL signaling. Not processed by SDD1 (AC O64495). Acts as growth-regulatory ligand for ERECTA family receptors. In Arabidopsis thaliana (Mouse-ear cress), this protein is EPIDERMAL PATTERNING FACTOR-like protein 6.